Here is a 110-residue protein sequence, read N- to C-terminus: Probable ribonuclease HepT (110 aa).

Catalysis depends on residues Arg-75 and His-80. The short motif at 75–82 (RDKLIHAY) is the RX(4)HXY motif element. Residue Tyr-82 is modified to O-di-AMP-tyrosine.

The protein belongs to the HepT RNase toxin family. Modified by cognate antitoxin MntA; probably at least 2 successive AMPylation events occur on Tyr-82.

In terms of biological role, toxic component of a type VII toxin-antitoxin (TA) system. Overexpression in E.coli inhibits cell growth. Neutralized by cognate antitoxin MntA. Neutralization is probably due to AMPylation by MntA. Probably an RNAase. This is Probable ribonuclease HepT from Thermococcus cleftensis (strain DSM 27260 / KACC 17922 / CL1).